The chain runs to 349 residues: Ribosomal RNA small subunit methyltransferase H (349 aa).

S-adenosyl-L-methionine is bound by residues 34–36, Asp54, Phe81, Asp102, and Gln109; that span reads GGH. Residues 328–349 form a disordered region; sequence SRTGSVQHGQAKHKGVVQRGGS.

The protein belongs to the methyltransferase superfamily. RsmH family.

The protein resides in the cytoplasm. It catalyses the reaction cytidine(1402) in 16S rRNA + S-adenosyl-L-methionine = N(4)-methylcytidine(1402) in 16S rRNA + S-adenosyl-L-homocysteine + H(+). Functionally, specifically methylates the N4 position of cytidine in position 1402 (C1402) of 16S rRNA. The sequence is that of Ribosomal RNA small subunit methyltransferase H from Dehalococcoides mccartyi (strain ATCC BAA-2100 / JCM 16839 / KCTC 5957 / BAV1).